Here is a 150-residue protein sequence, read N- to C-terminus: UPF0756 membrane protein A1S_2121 (150 aa).

The next 4 helical transmembrane spans lie at 22–42, 45–65, 83–103, and 115–135; these read SQNAAVTIAAGILIVIKITPL, FFPYIQAHGLNLGILILTIGV, FISFKSLVAIAIGLLVAWLGG, and VVAGLLIGTVAGVALLRGVPV.

This sequence belongs to the UPF0756 family.

It localises to the cell membrane. The polypeptide is UPF0756 membrane protein A1S_2121 (Acinetobacter baumannii (strain ATCC 17978 / DSM 105126 / CIP 53.77 / LMG 1025 / NCDC KC755 / 5377)).